We begin with the raw amino-acid sequence, 1017 residues long: uncharacterized protein (1017 aa).

The tat-type signal signal peptide spans Met-1–Ala-34. The 59-residue stretch at Asp-45–Asp-103 folds into the 4Fe-4S Mo/W bis-MGD-type domain. [4Fe-4S] cluster is bound by residues Cys-53, Cys-56, Cys-61, and Cys-89. Lys-91 (electron donor/acceptor) is an active-site residue.

The protein belongs to the prokaryotic molybdopterin-containing oxidoreductase family. It depends on [4Fe-4S] cluster as a cofactor. Mo-bis(molybdopterin guanine dinucleotide) serves as cofactor. In terms of processing, predicted to be exported by the Tat system. The position of the signal peptide cleavage has not been experimentally proven.

This is an uncharacterized protein from Eggerthella lenta (strain ATCC 25559 / DSM 2243 / CCUG 17323 / JCM 9979 / KCTC 3265 / NCTC 11813 / VPI 0255 / 1899 B) (Eubacterium lentum).